Consider the following 480-residue polypeptide: MKTHYLSIALSVALSGCSLIPDYQRPPAPIQAGWPQGEAYAKLKAGTHRPSQTRDAELNWQVFFRDPVMRELIATALNNNRDLRQTALNVEAYRALHRIERSALLPRANTGVGATRQRLPADLSPTGEAGIQSQYDTTLSMSYELDMFGRLRSLERAALQEYLAAAETQRSMQIALIADVAIAYLSWRSDQAQLDLARSTLASYENSLNLIKSSREVGTASALDVRQARSLVETARVQQTLYTRQVAQDMNALQLLLGTKLPADLPISDVLDQPLAALSTGLPADLLLHRPDIRAAEHRLLAANANIGAARAAFFPSITLTAAAGTASHELDGLFEGGSGLWAFMPRINLPIFTAGRLRGNLDYRNVIKDINVAEYEKSIQTAFREVADGLAARGTFGEQLQAQRDLVDNNQAYYKLAYQRYDEGVDNYLAVLDAQRELFAAQQQFLSDRLNQLSSEVRLFKALGGGWDNISSQPLTAQN.

A signal peptide spans 1–16 (MKTHYLSIALSVALSG). A lipid anchor (N-palmitoyl cysteine) is attached at Cys17. Cys17 carries the S-diacylglycerol cysteine lipid modification.

The protein belongs to the outer membrane factor (OMF) (TC 1.B.17) family.

The protein localises to the cell outer membrane. Probable outer membrane component of the SepABC efflux pump with unknown specificity. This is Probable efflux pump outer membrane protein SepC (sepC) from Pseudomonas putida (strain ATCC 700007 / DSM 6899 / JCM 31910 / BCRC 17059 / LMG 24140 / F1).